Here is a 475-residue protein sequence, read N- to C-terminus: NADH-quinone oxidoreductase subunit N (475 aa).

The next 14 helical transmembrane spans lie at 7–27 (ISIA…VLLG), 40–60 (LLGA…SAVD), 74–94 (FIAI…LVAG), 105–125 (FEYT…LSAN), 127–147 (LMTL…LAAF), 161–181 (YFVL…LVYG), 191–211 (IAAA…LMAL), 242–262 (APKL…FGVY), 266–286 (WMLI…FGGL), 295–315 (LAYS…AGEV), 321–341 (VLTY…IVLA), 365–385 (LAVA…MAGF), 399–419 (ELYW…GYYL), and 448–468 (GATI…TGII).

Belongs to the complex I subunit 2 family. As to quaternary structure, NDH-1 is composed of 14 different subunits. Subunits NuoA, H, J, K, L, M, N constitute the membrane sector of the complex.

The protein resides in the cell inner membrane. The catalysed reaction is a quinone + NADH + 5 H(+)(in) = a quinol + NAD(+) + 4 H(+)(out). In terms of biological role, NDH-1 shuttles electrons from NADH, via FMN and iron-sulfur (Fe-S) centers, to quinones in the respiratory chain. The immediate electron acceptor for the enzyme in this species is believed to be ubiquinone. Couples the redox reaction to proton translocation (for every two electrons transferred, four hydrogen ions are translocated across the cytoplasmic membrane), and thus conserves the redox energy in a proton gradient. The chain is NADH-quinone oxidoreductase subunit N from Hirschia baltica (strain ATCC 49814 / DSM 5838 / IFAM 1418).